A 175-amino-acid polypeptide reads, in one-letter code: MSILPIVTAPDERLKQKSHRVLEVTDQTRKFMDDMLKTMYHEDAAGLAAVQVGILKRILVIDIKDHDPVERPKDFYPLFIVNPDIIDKSEELVTANEGCISVPRQRVEVARPESIKIKYLDYHNKQQELEANDWLARVIQHEYDHLEGKLMIDYLSSLKRDVVLRKLKKLKNNIV.

Residues C99 and H141 each contribute to the Fe cation site. E142 is an active-site residue. H145 is a Fe cation binding site.

The protein belongs to the polypeptide deformylase family. It depends on Fe(2+) as a cofactor.

It catalyses the reaction N-terminal N-formyl-L-methionyl-[peptide] + H2O = N-terminal L-methionyl-[peptide] + formate. In terms of biological role, removes the formyl group from the N-terminal Met of newly synthesized proteins. Requires at least a dipeptide for an efficient rate of reaction. N-terminal L-methionine is a prerequisite for activity but the enzyme has broad specificity at other positions. This Rickettsia canadensis (strain McKiel) protein is Peptide deformylase.